The chain runs to 645 residues: Translation factor GUF1 homolog, mitochondrial (645 aa).

In terms of domain architecture, tr-type G spans 40–215; that stretch reads DKIRNFGIVA…AIIDRVPAPT (176 aa). GTP contacts are provided by residues 49 to 56, 108 to 112, and 162 to 165; these read AHVDHGKS, DTPGH, and NKID.

Belongs to the TRAFAC class translation factor GTPase superfamily. Classic translation factor GTPase family. LepA subfamily.

The protein resides in the mitochondrion inner membrane. The catalysed reaction is GTP + H2O = GDP + phosphate + H(+). Functionally, promotes mitochondrial protein synthesis. May act as a fidelity factor of the translation reaction, by catalyzing a one-codon backward translocation of tRNAs on improperly translocated ribosomes. Binds to mitochondrial ribosomes in a GTP-dependent manner. In Caenorhabditis elegans, this protein is Translation factor GUF1 homolog, mitochondrial.